Reading from the N-terminus, the 201-residue chain is Recombination protein RecR (201 aa).

Residues 60 to 75 (CSECGNMDVSDPCTVC) form a C4-type zinc finger. The region spanning 83–178 (AAICVVETVG…SITSLARGVP (96 aa)) is the Toprim domain.

It belongs to the RecR family.

Its function is as follows. May play a role in DNA repair. It seems to be involved in an RecBC-independent recombinational process of DNA repair. It may act with RecF and RecO. This is Recombination protein RecR from Maricaulis maris (strain MCS10) (Caulobacter maris).